The chain runs to 379 residues: uncharacterized protein (379 aa).

Disordered stretches follow at residues 1–37 (MSSIQGKGTAGPSPEGIPNSREDGEMNPEGVTISGQT), 130–150 (VRYSSGRHGMDRNKSSSLSPE), and 332–379 (NPPI…RGSR).

It belongs to the chlamydial CPn_0499/CT_392/TC_0671 family.

This is an uncharacterized protein from Chlamydia muridarum (strain MoPn / Nigg).